A 297-amino-acid polypeptide reads, in one-letter code: Phosphoribosylaminoimidazole-succinocarboxamide synthase (297 aa).

It belongs to the SAICAR synthetase family.

It carries out the reaction 5-amino-1-(5-phospho-D-ribosyl)imidazole-4-carboxylate + L-aspartate + ATP = (2S)-2-[5-amino-1-(5-phospho-beta-D-ribosyl)imidazole-4-carboxamido]succinate + ADP + phosphate + 2 H(+). It participates in purine metabolism; IMP biosynthesis via de novo pathway; 5-amino-1-(5-phospho-D-ribosyl)imidazole-4-carboxamide from 5-amino-1-(5-phospho-D-ribosyl)imidazole-4-carboxylate: step 1/2. The sequence is that of Phosphoribosylaminoimidazole-succinocarboxamide synthase from Rhodococcus erythropolis (strain PR4 / NBRC 100887).